The chain runs to 115 residues: MEKMLLKSTTRHVRIFTADVINNDLVFHPNKLTLDLDPDNEFIWNEDSLKKVNQRFTELVQERAGKSLDDYELRKIGSEIEGLIKYLLQNGLLSYNPECRVMNYSMGLPKTKEVL.

The protein belongs to the complex I NdhM subunit family. In terms of assembly, NDH-1 can be composed of about 15 different subunits; different subcomplexes with different compositions have been identified which probably have different functions.

It is found in the cellular thylakoid membrane. The catalysed reaction is a plastoquinone + NADH + (n+1) H(+)(in) = a plastoquinol + NAD(+) + n H(+)(out). It catalyses the reaction a plastoquinone + NADPH + (n+1) H(+)(in) = a plastoquinol + NADP(+) + n H(+)(out). In terms of biological role, NDH-1 shuttles electrons from an unknown electron donor, via FMN and iron-sulfur (Fe-S) centers, to quinones in the respiratory and/or the photosynthetic chain. The immediate electron acceptor for the enzyme in this species is believed to be plastoquinone. Couples the redox reaction to proton translocation, and thus conserves the redox energy in a proton gradient. Cyanobacterial NDH-1 also plays a role in inorganic carbon-concentration. In Prochlorococcus marinus subsp. pastoris (strain CCMP1986 / NIES-2087 / MED4), this protein is NAD(P)H-quinone oxidoreductase subunit M.